The following is a 389-amino-acid chain: 3-oxo-Delta(4,5)-steroid 5-beta-reductase (389 aa).

Residues 35 to 37 (TGI), 63 to 64 (RR), 81 to 82 (DI), threonine 105, and glutamine 143 each bind NADP(+). Catalysis depends on residues lysine 147 and tyrosine 179. NADP(+)-binding positions include tyrosine 179, isoleucine 206, and 213–215 (SMM).

It belongs to the short-chain dehydrogenases/reductases (SDR) family. Highly divergent. Homodimer.

It carries out the reaction 5beta-cholestan-3-one + NADP(+) = cholest-4-en-3-one + NADPH + H(+). It catalyses the reaction 4,5beta-dihydrocortisone + NADP(+) = cortisone + NADPH + H(+). Functionally, involved in cardenolide biosynthesis. Catalyzes the stereospecific conversion of progesterone to 5-beta-pregnane-3,20-dione. Can use progesterone, testosterone, 4-androstene-3,17-dione, cortisol and cortisone as substrates, but not pregnenolone, 21-OH-pregnenolone or isoprogesterone. NADPH could not be replaced by NADH. The protein is 3-oxo-Delta(4,5)-steroid 5-beta-reductase of Digitalis lanata (Grecian foxglove).